Here is a 636-residue protein sequence, read N- to C-terminus: Polyadenylate-binding protein 1 (636 aa).

N-acetylmethionine is present on M1. RRM domains are found at residues 11 to 89 (ASLY…WSQR), 99 to 175 (GNIF…RFKS), 191 to 268 (TNVY…RAQK), and 294 to 370 (VNLY…LAQR). Positions 166–289 (RKVFVGRFKS…FEQMKQDRIT (124 aa)) are CSDE1-binding. At K299 the chain carries N6-methyllysine. At S315 the chain carries Phosphoserine. The residue at position 319 (T319) is a Phosphothreonine. R385, R419, R432, and R436 each carry omega-N-methylarginine. Omega-N-methylated arginine; by CARM1 is present on residues R455 and R460. Omega-N-methylarginine occurs at positions 475 and 481. R493 is modified (asymmetric dimethylarginine; alternate). R493 is modified (dimethylated arginine; alternate). The residue at position 493 (R493) is an Omega-N-methylarginine; alternate. The residue at position 506 (R506) is an Omega-N-methylarginine. K512 is subject to N6-acetyllysine. Position 518 is an omega-N-methylarginine (R518). A PABC domain is found at 542–619 (QEPLTASMLA…AVAVLQAHQA (78 aa)).

The protein belongs to the polyadenylate-binding protein type-1 family. May form homodimers. Component of a multisubunit autoregulatory ribonucleoprotein complex (ARC), at least composed of IGF2BP1, PABPC1 and CSDE1. Directly interacts with IGF2BP1. Part of a complex associated with the FOS mCRD domain and consisting of HNRPD, SYNCRIP, PAIP1 and CSDE1/UNR. Interacts with PAIP1 and PAIP2 (via the PABPC1-interacting motifs PAM1 and PAM2). Interacts with PAIP1 with a 1:1 stoichiometry and with PAIP2 with a 1:2 stoichiometry. The interaction with CSDE1 is direct and RNA-independent. Found in a mRNP complex with YBX2. Interacts with TENT2/GLD2. Identified in the spliceosome C complex. Identified in a mRNP complex, at least composed of DHX9, DDX3X, ELAVL1, HNRNPU, IGF2BP1, ILF3, PABPC1, PCBP2, PTBP2, STAU1, STAU2, SYNCRIP and YBX1. The interaction with DDX3X is direct and RNA-independent. This interaction increases in stressed cells and decreases during cell recovery. Identified in a IGF2BP1-dependent mRNP granule complex containing untranslated mRNAs. Interacts with NXF1/TAP. Interacts with PIWIL1. Interacts with AGO1, AGO2, GSPT1 and GSPT2. Interacts with LARP4B. Interacts (via the second and third RRM domains and the C-terminus) with PAIP2B (via central acidic portion and C-terminus). Forms a complex with LARP1 and SHFL. Interacts with LARP4. Interacts with ZFC3H1 in a RNase-sensitive manner. Interacts with TRIM71 (via NHL repeats) in an RNA-dependent manner. Interacts with TENT5C; the interaction has no effect on TENT5C poly(A) polymerase function. Interacts with G3BP1 and G3BP2. Interacts with ENDOV; the interaction is RNA-dependent and stimulates ENDOV activity. Interacts with UPF1; the interaction is RNA-dependent. Interacts with IGF2BP2 and IGF2BP3. May interact with SETX. Interacts with RBM46. Interacts with PAN3. Post-translationally, phosphorylated by MAPKAPK2. In terms of processing, methylated by CARM1. Arg-493 is dimethylated, probably to asymmetric dimethylarginine.

It localises to the cytoplasm. Its subcellular location is the stress granule. The protein resides in the nucleus. The protein localises to the cell projection. It is found in the lamellipodium. Binds the poly(A) tail of mRNA, including that of its own transcript, and regulates processes of mRNA metabolism such as pre-mRNA splicing and mRNA stability. Its function in translational initiation regulation can either be enhanced by PAIP1 or repressed by PAIP2. Can probably bind to cytoplasmic RNA sequences other than poly(A) in vivo. Binds to N6-methyladenosine (m6A)-containing mRNAs and contributes to MYC stability by binding to m6A-containing MYC mRNAs. Involved in translationally coupled mRNA turnover. Implicated with other RNA-binding proteins in the cytoplasmic deadenylation/translational and decay interplay of the FOS mRNA mediated by the major coding-region determinant of instability (mCRD) domain. Involved in regulation of nonsense-mediated decay (NMD) of mRNAs containing premature stop codons; for the recognition of premature termination codons (PTC) and initiation of NMD a competitive interaction between UPF1 and PABPC1 with the ribosome-bound release factors is proposed. By binding to long poly(A) tails, may protect them from uridylation by ZCCHC6/ZCCHC11 and hence contribute to mRNA stability. This Bos taurus (Bovine) protein is Polyadenylate-binding protein 1 (PABPC1).